A 634-amino-acid chain; its full sequence is Probable beta-glucosidase C (634 aa).

The signal sequence occupies residues 1 to 19 (MRIDCTVASLTALASGCQA). Residues Asn90, Asn112, Asn219, and Asn270 are each glycosylated (N-linked (GlcNAc...) asparagine). Asp337 is an active-site residue. Residues Asn360, Asn476, Asn484, and Asn524 are each glycosylated (N-linked (GlcNAc...) asparagine).

Belongs to the glycosyl hydrolase 3 family.

It is found in the secreted. The enzyme catalyses Hydrolysis of terminal, non-reducing beta-D-glucosyl residues with release of beta-D-glucose.. It participates in glycan metabolism; cellulose degradation. Functionally, beta-glucosidases are one of a number of cellulolytic enzymes involved in the degradation of cellulosic biomass. Catalyzes the last step releasing glucose from the inhibitory cellobiose. The chain is Probable beta-glucosidase C (bglC) from Aspergillus flavus (strain ATCC 200026 / FGSC A1120 / IAM 13836 / NRRL 3357 / JCM 12722 / SRRC 167).